Here is a 334-residue protein sequence, read N- to C-terminus: Cathepsin K (334 aa).

Residues 1–19 (MLRLHWLALLVLLLPMAAA) form the signal peptide. Positions 20-119 (QLRPEPELDA…TLYVPDWSSR (100 aa)) are cleaved as a propeptide — activation peptide. An N-linked (GlcNAc...) asparagine glycan is attached at Asn-108. Disulfide bonds link Cys-141/Cys-182, Cys-175/Cys-215, and Cys-274/Cys-323. The active site involves Cys-144. Catalysis depends on residues His-281 and Asn-301.

This sequence belongs to the peptidase C1 family.

The catalysed reaction is Broad proteolytic activity. With small-molecule substrates and inhibitors, the major determinant of specificity is P2, which is preferably Leu, Met &gt; Phe, and not Arg.. In terms of biological role, closely involved in osteoclastic bone resorption and may participate partially in the disorder of bone remodeling. Displays potent endoprotease activity against fibrinogen at acid pH. May play an important role in extracellular matrix degradation. The protein is Cathepsin K (CTSK) of Gallus gallus (Chicken).